We begin with the raw amino-acid sequence, 689 residues long: Glycine--tRNA ligase beta subunit (689 aa).

The protein belongs to the class-II aminoacyl-tRNA synthetase family. As to quaternary structure, tetramer of two alpha and two beta subunits.

It is found in the cytoplasm. It carries out the reaction tRNA(Gly) + glycine + ATP = glycyl-tRNA(Gly) + AMP + diphosphate. This Shigella flexneri serotype 5b (strain 8401) protein is Glycine--tRNA ligase beta subunit.